The sequence spans 313 residues: Porphobilinogen deaminase (313 aa).

An S-(dipyrrolylmethanemethyl)cysteine modification is found at Cys-242.

It belongs to the HMBS family. As to quaternary structure, monomer. The cofactor is dipyrromethane.

The enzyme catalyses 4 porphobilinogen + H2O = hydroxymethylbilane + 4 NH4(+). Its pathway is porphyrin-containing compound metabolism; protoporphyrin-IX biosynthesis; coproporphyrinogen-III from 5-aminolevulinate: step 2/4. In terms of biological role, tetrapolymerization of the monopyrrole PBG into the hydroxymethylbilane pre-uroporphyrinogen in several discrete steps. The polypeptide is Porphobilinogen deaminase (Pseudomonas fluorescens (strain SBW25)).